The sequence spans 298 residues: Glycine--tRNA ligase alpha subunit (298 aa).

Belongs to the class-II aminoacyl-tRNA synthetase family. As to quaternary structure, tetramer of two alpha and two beta subunits.

It localises to the cytoplasm. The enzyme catalyses tRNA(Gly) + glycine + ATP = glycyl-tRNA(Gly) + AMP + diphosphate. The chain is Glycine--tRNA ligase alpha subunit from Helicobacter pylori (strain P12).